A 537-amino-acid polypeptide reads, in one-letter code: CTP synthase (537 aa).

The tract at residues 1–267 (MAKYIFVTGG…DEYVIKRLNL (267 aa)) is amidoligase domain. Ser13 provides a ligand contact to CTP. Ser13 provides a ligand contact to UTP. 14–19 (SLGKGI) lines the ATP pocket. Tyr54 contacts L-glutamine. ATP is bound at residue Asp71. The Mg(2+) site is built by Asp71 and Glu141. Residues 148–150 (DIE), 188–193 (KTKPTQ), and Lys224 each bind CTP. UTP contacts are provided by residues 188-193 (KTKPTQ) and Lys224. 240 to 242 (RDV) contacts ATP. The Glutamine amidotransferase type-1 domain maps to 292 to 534 (EVALVGKYVD…VKAMLNLKIN (243 aa)). Gly354 is a binding site for L-glutamine. Residue Cys381 is the Nucleophile; for glutamine hydrolysis of the active site. L-glutamine is bound by residues 382-385 (LGMQ), Glu405, and Arg462. Catalysis depends on residues His507 and Glu509.

It belongs to the CTP synthase family. As to quaternary structure, homotetramer.

The enzyme catalyses UTP + L-glutamine + ATP + H2O = CTP + L-glutamate + ADP + phosphate + 2 H(+). It catalyses the reaction L-glutamine + H2O = L-glutamate + NH4(+). It carries out the reaction UTP + NH4(+) + ATP = CTP + ADP + phosphate + 2 H(+). The protein operates within pyrimidine metabolism; CTP biosynthesis via de novo pathway; CTP from UDP: step 2/2. Its activity is regulated as follows. Allosterically activated by GTP, when glutamine is the substrate; GTP has no effect on the reaction when ammonia is the substrate. The allosteric effector GTP functions by stabilizing the protein conformation that binds the tetrahedral intermediate(s) formed during glutamine hydrolysis. Inhibited by the product CTP, via allosteric rather than competitive inhibition. Catalyzes the ATP-dependent amination of UTP to CTP with either L-glutamine or ammonia as the source of nitrogen. Regulates intracellular CTP levels through interactions with the four ribonucleotide triphosphates. The polypeptide is CTP synthase (Caldanaerobacter subterraneus subsp. tengcongensis (strain DSM 15242 / JCM 11007 / NBRC 100824 / MB4) (Thermoanaerobacter tengcongensis)).